The chain runs to 456 residues: Histidine--tRNA ligase (456 aa).

This sequence belongs to the class-II aminoacyl-tRNA synthetase family. In terms of assembly, homodimer.

The protein localises to the cytoplasm. It carries out the reaction tRNA(His) + L-histidine + ATP = L-histidyl-tRNA(His) + AMP + diphosphate + H(+). The chain is Histidine--tRNA ligase from Borrelia garinii subsp. bavariensis (strain ATCC BAA-2496 / DSM 23469 / PBi) (Borreliella bavariensis).